Reading from the N-terminus, the 764-residue chain is Hemocyte protein-glutamine gamma-glutamyltransferase (764 aa).

Catalysis depends on residues Cys-343, His-402, and Asp-425. Ca(2+) is bound by residues Asn-465, Asp-467, Glu-522, and Glu-527.

Belongs to the transglutaminase superfamily. Transglutaminase family. It depends on Ca(2+) as a cofactor. In terms of tissue distribution, mainly expressed in hemocytes, hepatopancreas, and gastric tissues. On the other hand nothing was detected in the heart, intestine and muscle.

The protein resides in the membrane. The enzyme catalyses L-glutaminyl-[protein] + L-lysyl-[protein] = [protein]-L-lysyl-N(6)-5-L-glutamyl-[protein] + NH4(+). Its function is as follows. Catalyzes the cross-linking of proteins and the conjugation of polyamines to proteins. The chain is Hemocyte protein-glutamine gamma-glutamyltransferase from Tachypleus tridentatus (Japanese horseshoe crab).